Here is a 436-residue protein sequence, read N- to C-terminus: 3-ketoacyl-CoA thiolase (436 aa).

Residue cysteine 99 is the Acyl-thioester intermediate of the active site. Residues histidine 392 and cysteine 422 each act as proton acceptor in the active site.

The protein belongs to the thiolase-like superfamily. Thiolase family. Heterotetramer of two alpha chains (FadJ) and two beta chains (FadI).

It localises to the cytoplasm. It carries out the reaction an acyl-CoA + acetyl-CoA = a 3-oxoacyl-CoA + CoA. The protein operates within lipid metabolism; fatty acid beta-oxidation. Catalyzes the final step of fatty acid oxidation in which acetyl-CoA is released and the CoA ester of a fatty acid two carbons shorter is formed. This Shewanella loihica (strain ATCC BAA-1088 / PV-4) protein is 3-ketoacyl-CoA thiolase.